A 332-amino-acid chain; its full sequence is Glycerol-3-phosphate dehydrogenase [NAD(P)+] (332 aa).

NADPH is bound by residues S10, W11, H31, R32, and K105. The sn-glycerol 3-phosphate site is built by K105, G136, and S138. A140 contacts NADPH. Sn-glycerol 3-phosphate contacts are provided by K191, D244, S254, R255, and N256. The active-site Proton acceptor is the K191. R255 provides a ligand contact to NADPH. V279 and E281 together coordinate NADPH.

Belongs to the NAD-dependent glycerol-3-phosphate dehydrogenase family.

Its subcellular location is the cytoplasm. The enzyme catalyses sn-glycerol 3-phosphate + NAD(+) = dihydroxyacetone phosphate + NADH + H(+). The catalysed reaction is sn-glycerol 3-phosphate + NADP(+) = dihydroxyacetone phosphate + NADPH + H(+). It participates in membrane lipid metabolism; glycerophospholipid metabolism. Functionally, catalyzes the reduction of the glycolytic intermediate dihydroxyacetone phosphate (DHAP) to sn-glycerol 3-phosphate (G3P), the key precursor for phospholipid synthesis. The polypeptide is Glycerol-3-phosphate dehydrogenase [NAD(P)+] (Prosthecochloris aestuarii (strain DSM 271 / SK 413)).